A 274-amino-acid chain; its full sequence is Transmembrane O-methyltransferase (274 aa).

A helical transmembrane segment spans residues Val14–Val34. S-adenosyl-L-methionine contacts are provided by residues Glu120, Gly122–Thr123, Ser128, Glu146, and Ser176.

The protein belongs to the class I-like SAM-binding methyltransferase superfamily. Cation-dependent O-methyltransferase family. Interacts with LHFPL5, PCDH15, TMC1, TMC2 and TMIE. Interacts directly with TMC1. The interaction of TOMT with TMC1 and TMC2 is required for the transportation of TMC1/2 into the stereocilia of hair cells.

Its subcellular location is the membrane. The protein localises to the cytoplasm. It is found in the endoplasmic reticulum. It catalyses the reaction a catechol + S-adenosyl-L-methionine = a guaiacol + S-adenosyl-L-homocysteine + H(+). Catalyzes the O-methylation, and thereby the inactivation, of catecholamine neurotransmitters and catechol hormones. Required for auditory function. Component of the cochlear hair cell's mechanotransduction (MET) machinery. Involved in the assembly of the asymmetric tip-link MET complex. Required for transportation of TMC1 and TMC2 proteins into the mechanically sensitive stereocilia of the hair cells. The function in MET is independent of the enzymatic activity. This is Transmembrane O-methyltransferase from Propithecus coquereli (Coquerel's sifaka).